The sequence spans 573 residues: Sulfite oxidase, mitochondrial (573 aa).

The N-terminal 34 residues, Met1 to Ser34, are a transit peptide targeting the mitochondrion. The span at Gly14–Leu26 shows a compositional bias: basic residues. The interval Gly14 to Gly50 is disordered. One can recognise a Cytochrome b5 heme-binding domain in the interval Leu108–Glu186. Residues His144 and His168 each coordinate heme b. The hinge stretch occupies residues Val190–Ser199. The moco domain stretch occupies residues Pro200 to Lys423. Residues Tyr240–His244, Cys287, Asp344, His383, Arg388, and Asn399–Lys401 each bind Mo-molybdopterin. Residues Gly424–Lys567 form a homodimerization region.

Heme b serves as cofactor. It depends on Mo-molybdopterin as a cofactor. As to expression, expressed in the ensheathing glia with relatively weak expression in the CNS cortex (at protein level).

Its subcellular location is the mitochondrion intermembrane space. It carries out the reaction sulfite + O2 + H2O = sulfate + H2O2. Its pathway is energy metabolism; sulfur metabolism. In terms of biological role, required in ensheathing glial cells for normal larval locomotion. Oxidizes sulfite which is required to maintain glutamate homeostasis and as a consequence, neuronal network function. In Drosophila melanogaster (Fruit fly), this protein is Sulfite oxidase, mitochondrial.